A 1694-amino-acid chain; its full sequence is Immunoglobulin A1 protease autotransporter (1694 aa).

A signal peptide spans 1 to 25 (MLNKKFKLNFIALTVAYALTPYTEA). In terms of domain architecture, Peptidase S6 spans 26–332 (ALVRDDVDYQ…NIYKPEFAKT (307 aa)). Serine 288 is an active-site residue. Positions 991 to 1403 (VEKRNQTVDT…GSDRSTVALR (413 aa)) are disordered. Polar residues predominate over residues 997 to 1021 (TVDTTNITTPNNIQADVPSVPSNNE). Over residues 1037 to 1047 (TPSETTETVAE) the composition is skewed to low complexity. The segment covering 1049–1061 (SKQESKTVEKNEQ) has biased composition (basic and acidic residues). Positions 1082–1095 (KANTQTNEVAQSGS) are enriched in polar residues. 2 stretches are compositionally biased toward basic and acidic residues: residues 1104-1124 (EIKETAKVEKEEKAKVEKDEI) and 1142-1154 (APKEVSTDTKVEE). Polar residues-rich tracts occupy residues 1155–1178 (TQVQAQPQTQSTTVAAAEATSPNS) and 1199–1210 (VSKNQTENTTDQ). Residues 1211–1226 (PTEREKTAKVETEKTQ) are compositionally biased toward basic and acidic residues. Polar residues-rich tracts occupy residues 1227–1247 (EPPQVASQASPKQEQSETVQP), 1255–1297 (NVPT…TAIT), and 1308–1336 (TETAASTEDASQHKANTVADNSVANNSES). Residues 1352–1370 (ETSAEETTAASTDETTIAD) show a composition bias toward low complexity. Over residues 1374-1384 (RSKPNRRSRRS) the composition is skewed to basic residues. The region spanning 1442 to 1694 (NNEGQYNVWV…TAELKLSFSF (253 aa)) is the Autotransporter domain.

It localises to the periplasm. The protein localises to the secreted. It is found in the cell surface. The protein resides in the cell outer membrane. The catalysed reaction is Cleavage of immunoglobulin A molecules at certain Pro-|-Xaa bonds in the hinge region. No small molecule substrates are known.. Its function is as follows. Virulence factor; cleaves host immunoglobulin A producing intact Fc and Fab fragments. This is Immunoglobulin A1 protease autotransporter (iga) from Haemophilus influenzae (strain ATCC 51907 / DSM 11121 / KW20 / Rd).